The following is a 313-amino-acid chain: GTP cyclohydrolase MptA (313 aa).

The protein belongs to the GTP cyclohydrolase IV family. In terms of assembly, homodimer. Fe(2+) is required as a cofactor.

It catalyses the reaction GTP + H2O = 7,8-dihydroneopterin 2',3'-cyclic phosphate + formate + diphosphate + H(+). It participates in cofactor biosynthesis; 5,6,7,8-tetrahydromethanopterin biosynthesis. In terms of biological role, converts GTP to 7,8-dihydro-D-neopterin 2',3'-cyclic phosphate, the first intermediate in the biosynthesis of coenzyme methanopterin. The sequence is that of GTP cyclohydrolase MptA from Methanoculleus marisnigri (strain ATCC 35101 / DSM 1498 / JR1).